We begin with the raw amino-acid sequence, 677 residues long: Methionine--tRNA ligase (677 aa).

Residues 15–25 (PYANGSIHLGH) carry the 'HIGH' region motif. 4 residues coordinate Zn(2+): cysteine 146, cysteine 149, cysteine 159, and cysteine 162. The short motif at 333 to 337 (KMSKS) is the 'KMSKS' region element. Position 336 (lysine 336) interacts with ATP. One can recognise a tRNA-binding domain in the interval 575–677 (DFAKVDLRVA…AGAKPGHQVK (103 aa)).

This sequence belongs to the class-I aminoacyl-tRNA synthetase family. MetG type 1 subfamily. In terms of assembly, homodimer. Zn(2+) is required as a cofactor.

The protein localises to the cytoplasm. It catalyses the reaction tRNA(Met) + L-methionine + ATP = L-methionyl-tRNA(Met) + AMP + diphosphate. Its function is as follows. Is required not only for elongation of protein synthesis but also for the initiation of all mRNA translation through initiator tRNA(fMet) aminoacylation. The protein is Methionine--tRNA ligase (metG) of Escherichia coli (strain K12).